Reading from the N-terminus, the 203-residue chain is NADH-quinone oxidoreductase subunit C (203 aa).

It belongs to the complex I 30 kDa subunit family. As to quaternary structure, NDH-1 is composed of 14 different subunits. Subunits NuoB, C, D, E, F, and G constitute the peripheral sector of the complex.

It is found in the cell inner membrane. It catalyses the reaction a quinone + NADH + 5 H(+)(in) = a quinol + NAD(+) + 4 H(+)(out). NDH-1 shuttles electrons from NADH, via FMN and iron-sulfur (Fe-S) centers, to quinones in the respiratory chain. The immediate electron acceptor for the enzyme in this species is believed to be ubiquinone. Couples the redox reaction to proton translocation (for every two electrons transferred, four hydrogen ions are translocated across the cytoplasmic membrane), and thus conserves the redox energy in a proton gradient. The polypeptide is NADH-quinone oxidoreductase subunit C (Methylibium petroleiphilum (strain ATCC BAA-1232 / LMG 22953 / PM1)).